We begin with the raw amino-acid sequence, 236 residues long: Ubiquinone biosynthesis O-methyltransferase (236 aa).

S-adenosyl-L-methionine contacts are provided by R39, G59, D80, and M124.

Belongs to the methyltransferase superfamily. UbiG/COQ3 family.

It catalyses the reaction a 3-demethylubiquinol + S-adenosyl-L-methionine = a ubiquinol + S-adenosyl-L-homocysteine + H(+). The catalysed reaction is a 3-(all-trans-polyprenyl)benzene-1,2-diol + S-adenosyl-L-methionine = a 2-methoxy-6-(all-trans-polyprenyl)phenol + S-adenosyl-L-homocysteine + H(+). It functions in the pathway cofactor biosynthesis; ubiquinone biosynthesis. Functionally, O-methyltransferase that catalyzes the 2 O-methylation steps in the ubiquinone biosynthetic pathway. The polypeptide is Ubiquinone biosynthesis O-methyltransferase (Shewanella sp. (strain MR-7)).